We begin with the raw amino-acid sequence, 341 residues long: tRNA N6-adenosine threonylcarbamoyltransferase (341 aa).

Positions 114 and 118 each coordinate Fe cation. Substrate-binding positions include 136-140 (LVSGG), Asp169, Gly182, Asp186, and Asn278. Position 304 (Asp304) interacts with Fe cation.

The protein belongs to the KAE1 / TsaD family. The cofactor is Fe(2+).

It localises to the cytoplasm. The enzyme catalyses L-threonylcarbamoyladenylate + adenosine(37) in tRNA = N(6)-L-threonylcarbamoyladenosine(37) in tRNA + AMP + H(+). Required for the formation of a threonylcarbamoyl group on adenosine at position 37 (t(6)A37) in tRNAs that read codons beginning with adenine. Is involved in the transfer of the threonylcarbamoyl moiety of threonylcarbamoyl-AMP (TC-AMP) to the N6 group of A37, together with TsaE and TsaB. TsaD likely plays a direct catalytic role in this reaction. This is tRNA N6-adenosine threonylcarbamoyltransferase from Lactococcus lactis subsp. cremoris (strain SK11).